The following is a 702-amino-acid chain: Polyribonucleotide nucleotidyltransferase (702 aa).

Mg(2+)-binding residues include D485 and D491. One can recognise a KH domain in the interval 552–612; that stretch reads PRTEIICIDP…EGVKKAISII (61 aa). In terms of domain architecture, S1 motif spans 622-690; sequence GEIYLGKVTK…NQGRINLSRK (69 aa).

This sequence belongs to the polyribonucleotide nucleotidyltransferase family. The cofactor is Mg(2+).

The protein resides in the cytoplasm. The catalysed reaction is RNA(n+1) + phosphate = RNA(n) + a ribonucleoside 5'-diphosphate. Involved in mRNA degradation. Catalyzes the phosphorolysis of single-stranded polyribonucleotides processively in the 3'- to 5'-direction. The polypeptide is Polyribonucleotide nucleotidyltransferase (Clostridium botulinum (strain ATCC 19397 / Type A)).